A 387-amino-acid chain; its full sequence is MTDDFGRVDFGAFLAPWHRADSDANFAIHQDLELVEHLDRLGFAEFWLGEHHSGGVEIVASPEMFMAAAAQRTQRIKLGLGVVSLPYHHPFLVADRLVLLDHLSRGRMIFGAGPGQLADDAKMLGIDPIDSRRKMEEAFDVIHRLLAGETVTQKTDWFTCQDAYLHVAPYSNIQKAVTATVSPTGPKLAGKYGSGILSLAATNPVGVEKLAEHWKIAEDIAAENGQTVDRADWRLSGIMHVAETEEQARADVRHGLLYLMNYLSNITPGFAAAPDVDSLIDGINDAGLAVIGTPEMAVTQIRRLQEKSGGFGKFLVLHGEWASTTAALHSFELIAQQVAPHFNGDLGPRLRGYNQTMNSNRSAADITQAAQEEAQKRFEAERAIRTN.

This sequence belongs to the bacterial luciferase oxidoreductase family. It depends on FAD as a cofactor.

It catalyses the reaction (4S)-limonene + NADPH + O2 + H(+) = limonene 1,2-epoxide + NADP(+) + H2O. It carries out the reaction (4S)-limonene + NADH + O2 + H(+) = limonene 1,2-epoxide + NAD(+) + H2O. The enzyme catalyses (4R)-limonene + NADH + O2 + H(+) = limonene 1,2-epoxide + NAD(+) + H2O. The catalysed reaction is (4R)-limonene + NADPH + O2 + H(+) = limonene 1,2-epoxide + NADP(+) + H2O. It functions in the pathway terpene metabolism; (4R)-limonene degradation; (1S,4R)-1-hydroxylimonen-2-one from (4R)-limonene: step 1/3. Its function is as follows. Acts on both enantiomers of limonene by their NAD-dependent epoxidation at the 1,2 double bond forming limonene-1,2-epoxide. The polypeptide is Limonene 1,2-monooxygenase (limB) (Rhodococcus erythropolis (Arthrobacter picolinophilus)).